We begin with the raw amino-acid sequence, 537 residues long: Pancreatic secretory granule membrane major glycoprotein GP2 (537 aa).

The first 28 residues, 1–28 (MPHLMERMVGSGLLWLALVSCILTQASA), serve as a signal peptide directing secretion. The interval 41–60 (SYGLDLDCGAPGTPEAHVCF) is beta hairpin. 11 disulfides stabilise this stretch: Cys48–Cys59, Cys63–Cys157, Cys85–Cys172, Cys107–Cys145, Cys113–Cys177, Cys138–Cys146, Cys190–Cys200, Cys194–Cys209, Cys211–Cys241, Cys229–Cys320, and Cys261–Cys284. Residues 61–81 (DPCQNYTLLDEPFRSTENSAG) are D10C. N-linked (GlcNAc...) (high mannose) asparagine glycosylation is present at Asn65. 3 N-linked (GlcNAc...) asparagine glycosylation sites follow: Asn88, Asn122, and Asn134. The EGF-like domain maps to 186–230 (VEDKCEKACRPEEECLALNSTWGCFCRQDLNSSDVHSLQPQLDCG). Asn204, Asn216, and Asn260 each carry an N-linked (GlcNAc...) asparagine glycan. The interval 228-321 (DCGPREIKVK…TILNINFQCA (94 aa)) is ZP-N. The ZP domain occupies 228 to 484 (DCGPREIKVK…PSCSRSQVRS (257 aa)). Residues Asn291 and Asn342 are each glycosylated (N-linked (GlcNAc...) asparagine). The tract at residues 322–345 (YPLDMKVSLQAALQPIVSSLNVSV) is flexible ZP-N/ZP-C linker. Residues 346–357 (DGNGEFIVRMAL) are internal hydrophobic patch (IHP). The tract at residues 346-484 (DGNGEFIVRM…PSCSRSQVRS (139 aa)) is ZP-C. Asn362 is a glycosylation site (N-linked (GlcNAc...) asparagine). Disulfide bonds link Cys401/Cys461, Cys422/Cys477, and Cys466/Cys473. The tract at residues 491–499 (LARVLDLGP) is external hydrophobic patch (EHP). Asn512 is lipidated: GPI-anchor amidated asparagine. A propeptide spans 513 to 537 (GTPSTAGFLVAWPMVLLTVLLAWLF) (removed in mature form).

In terms of assembly, interacts with SYCN. Interacts with bacterial adhesin fimH. Post-translationally, N-glycosylated. Glycosylated Asn-65 may be required for interaction with bacterial adhesin fimH. As to expression, expressed in pancreas (at protein level). Specifically expressed by M (microfold) cells which are atypical epithelial cells of the intestine (at protein level).

The protein localises to the zymogen granule membrane. Its subcellular location is the secreted. It localises to the cell membrane. It is found in the apical cell membrane. The protein resides in the membrane raft. The protein localises to the endosome. In terms of biological role, functions as an intestinal M-cell transcytotic receptor specific for type-I-piliated bacteria that participates in the mucosal immune response toward these bacteria. At the apical membrane of M-cells it binds fimH, a protein of the bacteria type I pilus tip. Internalizes bound bacteria, like E.coli and S.typhimurium, from the lumen of the intestine and delivers them, through M-cells, to the underlying organized lymphoid follicles where they are captured by antigen-presenting dendritic cells to elicit a mucosal immune response. In Homo sapiens (Human), this protein is Pancreatic secretory granule membrane major glycoprotein GP2.